A 909-amino-acid chain; its full sequence is Phosphoenolpyruvate carboxylase (909 aa).

Catalysis depends on residues H151 and K578.

It belongs to the PEPCase type 1 family. Requires Mg(2+) as cofactor.

It catalyses the reaction oxaloacetate + phosphate = phosphoenolpyruvate + hydrogencarbonate. In terms of biological role, forms oxaloacetate, a four-carbon dicarboxylic acid source for the tricarboxylic acid cycle. The sequence is that of Phosphoenolpyruvate carboxylase from Caulobacter vibrioides (strain ATCC 19089 / CIP 103742 / CB 15) (Caulobacter crescentus).